Reading from the N-terminus, the 508-residue chain is MDEDVLKEAIEQYKQQIIQIQTVLESGQIEGRAELAKLKDDLTELIQVTEESLLSLKKSQLLQLLEQQESSHHDSGTPETDTKTSVDYRNSYVNDHTIDDNDDEDNDENIIGTKCRVAFTQEWGVKEHHNAMVFKLESIPLDEETVDQAKVRVLFLNPTHRSMVPCPYFLEGKCKFAGAECRFSHGYLVDVEHLKPFKEPDFSSVKAGQRCLARYSDGVWYNSTIKSIKHESHEFLIHYETYNTDATLPLDDIYPLGPEEVESDSESDSQSDTGDSSSSKAAIEQDDDVIRYAWKPTGALSSLGDWEQHTKGIGSKLMAKMGYIFGKGLGKDGEGRVEPIEVVVLPQGKSLDKCAELREKNKLKEPFKRKKKKLVVASTTSASQGKASDVFDFINHKLGHSKGSLHDLRVSHPGAKPDIRKTRKSADENTNWNIQLFKIHEEISSVKKQLNKQEEALQRHTTRDSRNKTIFTEKRDSVHNRLQELLKKEKKIQEKIHQKDQHRKLTVF.

The disordered stretch occupies residues 67–86; that stretch reads QQESSHHDSGTPETDTKTSV. Residues 69-86 are compositionally biased toward basic and acidic residues; the sequence is ESSHHDSGTPETDTKTSV. Residues 161–188 form a C3H1-type zinc finger; sequence RSMVPCPYFLEGKCKFAGAECRFSHGYL. A disordered region spans residues 253–282; it reads IYPLGPEEVESDSESDSQSDTGDSSSSKAA. The span at 259–269 shows a compositional bias: acidic residues; the sequence is EEVESDSESDS. Residues 270–279 are compositionally biased toward low complexity; sequence QSDTGDSSSS. Positions 310–356 constitute a G-patch domain; sequence TKGIGSKLMAKMGYIFGKGLGKDGEGRVEPIEVVVLPQGKSLDKCAE. Residues 404–426 are disordered; that stretch reads SLHDLRVSHPGAKPDIRKTRKSA.

It localises to the nucleus. In terms of biological role, transcription repressor. The protein is Zinc finger CCCH-type with G patch domain-containing protein of Nematostella vectensis (Starlet sea anemone).